The primary structure comprises 131 residues: Small ribosomal subunit protein uS11 (131 aa).

Belongs to the universal ribosomal protein uS11 family. Part of the 30S ribosomal subunit. Interacts with proteins S7 and S18. Binds to IF-3.

Located on the platform of the 30S subunit, it bridges several disparate RNA helices of the 16S rRNA. Forms part of the Shine-Dalgarno cleft in the 70S ribosome. This is Small ribosomal subunit protein uS11 from Helicobacter pylori (strain Shi470).